The primary structure comprises 99 residues: Aspartyl/glutamyl-tRNA(Asn/Gln) amidotransferase subunit C (99 aa).

It belongs to the GatC family. In terms of assembly, heterotrimer of A, B and C subunits.

It catalyses the reaction L-glutamyl-tRNA(Gln) + L-glutamine + ATP + H2O = L-glutaminyl-tRNA(Gln) + L-glutamate + ADP + phosphate + H(+). The catalysed reaction is L-aspartyl-tRNA(Asn) + L-glutamine + ATP + H2O = L-asparaginyl-tRNA(Asn) + L-glutamate + ADP + phosphate + 2 H(+). Allows the formation of correctly charged Asn-tRNA(Asn) or Gln-tRNA(Gln) through the transamidation of misacylated Asp-tRNA(Asn) or Glu-tRNA(Gln) in organisms which lack either or both of asparaginyl-tRNA or glutaminyl-tRNA synthetases. The reaction takes place in the presence of glutamine and ATP through an activated phospho-Asp-tRNA(Asn) or phospho-Glu-tRNA(Gln). This is Aspartyl/glutamyl-tRNA(Asn/Gln) amidotransferase subunit C from Paraburkholderia phymatum (strain DSM 17167 / CIP 108236 / LMG 21445 / STM815) (Burkholderia phymatum).